A 110-amino-acid polypeptide reads, in one-letter code: uncharacterized protein (110 aa).

A compositionally biased stretch (basic and acidic residues) spans 1–16 (MSVKLKYDKIDQRNGD). Disordered regions lie at residues 1–29 (MSVK…GNGN) and 73–100 (IKQQ…ESPN). Residues 20 to 29 (GNHNNCGNGN) show a composition bias toward low complexity.

This is an uncharacterized protein from Dictyostelium discoideum (Social amoeba).